Reading from the N-terminus, the 299-residue chain is tRNA dimethylallyltransferase (299 aa).

13 to 20 is an ATP binding site; the sequence is GPTASGKT. Residue 15 to 20 coordinates substrate; the sequence is TASGKT. An interaction with substrate tRNA region spans residues 38–41; the sequence is DSRQ.

The protein belongs to the IPP transferase family. Monomer. Mg(2+) serves as cofactor.

The enzyme catalyses adenosine(37) in tRNA + dimethylallyl diphosphate = N(6)-dimethylallyladenosine(37) in tRNA + diphosphate. Functionally, catalyzes the transfer of a dimethylallyl group onto the adenine at position 37 in tRNAs that read codons beginning with uridine, leading to the formation of N6-(dimethylallyl)adenosine (i(6)A). The sequence is that of tRNA dimethylallyltransferase from Prochlorococcus marinus subsp. pastoris (strain CCMP1986 / NIES-2087 / MED4).